Reading from the N-terminus, the 723-residue chain is Fatty acid oxidation complex subunit alpha (723 aa).

Residues 1 to 189 form an enoyl-CoA hydratase/isomerase region; sequence MIYQAETLQV…KIGLLDAVVD (189 aa). Residue D296 participates in substrate binding. Positions 311 to 723 are 3-hydroxyacyl-CoA dehydrogenase; the sequence is NKETQRAAVL…FYGAQQQGSI (413 aa). Residues M325, D344, 401–403, K408, and S430 each bind NAD(+); that span reads VVE. The For 3-hydroxyacyl-CoA dehydrogenase activity role is filled by H451. Position 454 (N454) interacts with NAD(+). Substrate contacts are provided by N501 and Y661.

This sequence in the N-terminal section; belongs to the enoyl-CoA hydratase/isomerase family. The protein in the C-terminal section; belongs to the 3-hydroxyacyl-CoA dehydrogenase family. In terms of assembly, heterotetramer of two alpha chains (FadB) and two beta chains (FadA).

It catalyses the reaction a (3S)-3-hydroxyacyl-CoA + NAD(+) = a 3-oxoacyl-CoA + NADH + H(+). It carries out the reaction a (3S)-3-hydroxyacyl-CoA = a (2E)-enoyl-CoA + H2O. The enzyme catalyses a 4-saturated-(3S)-3-hydroxyacyl-CoA = a (3E)-enoyl-CoA + H2O. The catalysed reaction is (3S)-3-hydroxybutanoyl-CoA = (3R)-3-hydroxybutanoyl-CoA. It catalyses the reaction a (3Z)-enoyl-CoA = a 4-saturated (2E)-enoyl-CoA. It carries out the reaction a (3E)-enoyl-CoA = a 4-saturated (2E)-enoyl-CoA. It participates in lipid metabolism; fatty acid beta-oxidation. Involved in the aerobic and anaerobic degradation of long-chain fatty acids via beta-oxidation cycle. Catalyzes the formation of 3-oxoacyl-CoA from enoyl-CoA via L-3-hydroxyacyl-CoA. It can also use D-3-hydroxyacyl-CoA and cis-3-enoyl-CoA as substrate. This is Fatty acid oxidation complex subunit alpha from Vibrio vulnificus (strain YJ016).